Consider the following 378-residue polypeptide: Fetuin-B (378 aa).

The first 18 residues, 1-18, serve as a signal peptide directing secretion; sequence MGVLRLLVLCTLAACCVA. 2 Cystatin fetuin-B-type domains span residues 28 to 141 and 152 to 261; these read NAPF…YNCT and SMCP…VSCE. Asn-40 is a glycosylation site (N-linked (GlcNAc...) asparagine). 5 cysteine pairs are disulfide-bonded: Cys-96–Cys-107, Cys-120–Cys-140, Cys-154–Cys-157, Cys-217–Cys-224, and Cys-237–Cys-260. Residue Asn-139 is glycosylated (N-linked (GlcNAc...) asparagine). 2 disordered regions span residues 266–338 and 357–378; these read QDQV…PQGD and LPFP…QRTP. The span at 286 to 297 shows a compositional bias: polar residues; it reads QKNTAPTSSPSI. O-linked (GalNAc...) threonine glycans are attached at residues Thr-289 and Thr-292. A Phosphoserine modification is found at Ser-316. Residues 362–378 are compositionally biased toward basic and acidic residues; it reads KEQRSPECPGPEKQRTP.

The protein belongs to the fetuin family. In terms of tissue distribution, liver.

It is found in the secreted. Its function is as follows. Protease inhibitor required for egg fertilization. Required to prevent premature zona pellucida hardening before fertilization, probably by inhibiting the protease activity of ASTL, a protease that mediates the cleavage of ZP2 and triggers zona pellucida hardening. This chain is Fetuin-B (Fetub), found in Rattus norvegicus (Rat).